We begin with the raw amino-acid sequence, 157 residues long: SsrA-binding protein (157 aa).

The disordered stretch occupies residues 133-157; that stretch reads LHDKRETEKKRDWSREKGRLLRARG. The span at 135-151 shows a compositional bias: basic and acidic residues; sequence DKRETEKKRDWSREKGR.

The protein belongs to the SmpB family.

The protein localises to the cytoplasm. In terms of biological role, required for rescue of stalled ribosomes mediated by trans-translation. Binds to transfer-messenger RNA (tmRNA), required for stable association of tmRNA with ribosomes. tmRNA and SmpB together mimic tRNA shape, replacing the anticodon stem-loop with SmpB. tmRNA is encoded by the ssrA gene; the 2 termini fold to resemble tRNA(Ala) and it encodes a 'tag peptide', a short internal open reading frame. During trans-translation Ala-aminoacylated tmRNA acts like a tRNA, entering the A-site of stalled ribosomes, displacing the stalled mRNA. The ribosome then switches to translate the ORF on the tmRNA; the nascent peptide is terminated with the 'tag peptide' encoded by the tmRNA and targeted for degradation. The ribosome is freed to recommence translation, which seems to be the essential function of trans-translation. This Bradyrhizobium diazoefficiens (strain JCM 10833 / BCRC 13528 / IAM 13628 / NBRC 14792 / USDA 110) protein is SsrA-binding protein.